The primary structure comprises 469 residues: 3-isopropylmalate dehydratase large subunit (469 aa).

Residues cysteine 349, cysteine 410, and cysteine 413 each coordinate [4Fe-4S] cluster.

This sequence belongs to the aconitase/IPM isomerase family. LeuC type 1 subfamily. As to quaternary structure, heterodimer of LeuC and LeuD. [4Fe-4S] cluster is required as a cofactor.

The enzyme catalyses (2R,3S)-3-isopropylmalate = (2S)-2-isopropylmalate. It participates in amino-acid biosynthesis; L-leucine biosynthesis; L-leucine from 3-methyl-2-oxobutanoate: step 2/4. In terms of biological role, catalyzes the isomerization between 2-isopropylmalate and 3-isopropylmalate, via the formation of 2-isopropylmaleate. The protein is 3-isopropylmalate dehydratase large subunit of Neisseria meningitidis serogroup C (strain 053442).